A 1074-amino-acid polypeptide reads, in one-letter code: Carbamoyl phosphate synthase large chain (1074 aa).

Positions 1 to 399 (MPKRSDIKKV…ALMKAIRSLD (399 aa)) are carboxyphosphate synthetic domain. Residues arginine 129, arginine 169, glycine 175, glycine 176, glutamate 208, valine 210, glutamate 215, glycine 241, isoleucine 242, histidine 243, glutamine 284, and glutamate 296 each contribute to the ATP site. An ATP-grasp 1 domain is found at 133 to 325 (KKAMERIGEP…IARVTAKIAI (193 aa)). Glutamine 284, glutamate 296, and asparagine 298 together coordinate Mg(2+). Positions 284, 296, and 298 each coordinate Mn(2+). The interval 400-543 (IDIDLGYNGK…YSTYDEECEL (144 aa)) is oligomerization domain. A carbamoyl phosphate synthetic domain region spans residues 544–933 (NPSDNKKVLI…FKAEMSAENN (390 aa)). The ATP-grasp 2 domain maps to 674 to 865 (NKLLNKLGIP…LAKIAAKVMA (192 aa)). The ATP site is built by arginine 710, aspartate 749, leucine 751, glutamate 756, glycine 781, isoleucine 782, histidine 783, serine 784, glutamine 824, and glutamate 836. The Mg(2+) site is built by glutamine 824, glutamate 836, and asparagine 838. Residues glutamine 824, glutamate 836, and asparagine 838 each contribute to the Mn(2+) site. Positions 932-1074 (NNLPLDGIVF…YHREVRYRAL (143 aa)) constitute an MGS-like domain. Positions 934–1074 (LPLDGIVFIS…YHREVRYRAL (141 aa)) are allosteric domain.

This sequence belongs to the CarB family. Composed of two chains; the small (or glutamine) chain promotes the hydrolysis of glutamine to ammonia, which is used by the large (or ammonia) chain to synthesize carbamoyl phosphate. Tetramer of heterodimers (alpha,beta)4. It depends on Mg(2+) as a cofactor. Requires Mn(2+) as cofactor.

It carries out the reaction hydrogencarbonate + L-glutamine + 2 ATP + H2O = carbamoyl phosphate + L-glutamate + 2 ADP + phosphate + 2 H(+). The catalysed reaction is hydrogencarbonate + NH4(+) + 2 ATP = carbamoyl phosphate + 2 ADP + phosphate + 2 H(+). It participates in amino-acid biosynthesis; L-arginine biosynthesis; carbamoyl phosphate from bicarbonate: step 1/1. The protein operates within pyrimidine metabolism; UMP biosynthesis via de novo pathway; (S)-dihydroorotate from bicarbonate: step 1/3. Large subunit of the glutamine-dependent carbamoyl phosphate synthetase (CPSase). CPSase catalyzes the formation of carbamoyl phosphate from the ammonia moiety of glutamine, carbonate, and phosphate donated by ATP, constituting the first step of 2 biosynthetic pathways, one leading to arginine and/or urea and the other to pyrimidine nucleotides. The large subunit (synthetase) binds the substrates ammonia (free or transferred from glutamine from the small subunit), hydrogencarbonate and ATP and carries out an ATP-coupled ligase reaction, activating hydrogencarbonate by forming carboxy phosphate which reacts with ammonia to form carbamoyl phosphate. This chain is Carbamoyl phosphate synthase large chain, found in Methanothrix thermoacetophila (strain DSM 6194 / JCM 14653 / NBRC 101360 / PT) (Methanosaeta thermophila).